The chain runs to 724 residues: Peroxidase mlt-7 (724 aa).

The signal sequence occupies residues 1–24; the sequence is MRRLHRNLSLLFLICILNEYRIES. A glycan (N-linked (GlcNAc...) asparagine) is linked at asparagine 7. A propeptide spanning residues 25-178 is cleaved from the precursor; it reads QTLSPPITDR…GCVPQLSDVG (154 aa). One can recognise a ShKT domain in the interval 42 to 76; it reads CCDHHEWCRFWASIGECNANKDWMTENCQLACGTC. Cysteine 181 and cysteine 198 are oxidised to a cystine. Asparagine 233 carries N-linked (GlcNAc...) asparagine glycosylation. Histidine 271 serves as the catalytic Proton acceptor. Ca(2+) is bound at residue aspartate 272. Cysteine 284 and cysteine 294 are disulfide-bonded. 4 residues coordinate Ca(2+): threonine 335, tyrosine 337, aspartate 339, and serine 341. Residue histidine 493 coordinates heme b. Asparagine 509 and asparagine 617 each carry an N-linked (GlcNAc...) asparagine glycan. Intrachain disulfides connect cysteine 588-cysteine 645 and cysteine 686-cysteine 710.

This sequence belongs to the peroxidase family. Heme b serves as cofactor. Expressed in the hypodermal cells, specifically the head and seam/body.

The catalysed reaction is 2 a phenolic donor + H2O2 = 2 a phenolic radical donor + 2 H2O. Its function is as follows. Plays an essential role in cuticle biogenesis. Required in combination with bli-3 for correct formation of cross-links in cuticle collagens. This chain is Peroxidase mlt-7, found in Caenorhabditis elegans.